Reading from the N-terminus, the 145-residue chain is 3-dehydroquinate dehydratase (145 aa).

Catalysis depends on Y22, which acts as the Proton acceptor. Substrate-binding residues include N74, H80, and D87. H100 acts as the Proton donor in catalysis. Residues 101–102 (IS) and R111 each bind substrate.

The protein belongs to the type-II 3-dehydroquinase family. In terms of assembly, homododecamer.

It carries out the reaction 3-dehydroquinate = 3-dehydroshikimate + H2O. It participates in metabolic intermediate biosynthesis; chorismate biosynthesis; chorismate from D-erythrose 4-phosphate and phosphoenolpyruvate: step 3/7. Catalyzes a trans-dehydration via an enolate intermediate. This Lachnoclostridium phytofermentans (strain ATCC 700394 / DSM 18823 / ISDg) (Clostridium phytofermentans) protein is 3-dehydroquinate dehydratase.